Reading from the N-terminus, the 452-residue chain is MDSLIRTFSNAQSSRDGYQLAQTLSPDLPQQQLQAIWKSCGHHDAQNVIKRGIQNSTSGFEKLPKDEVQGWSDVYLAYWKAIGELLPALNQAPQSSWTKVYDAWKELLSALYRGYIGQGFEAWSIPCLYVVAKNLRFFALKADEERNNNVAAGDTSGQIFQDDFDPESEQNQKLEDCARQLNRIFTLCLNDRAPLEESRKWGIYYIINLLFKTYFKLNSASLSKNILKTLSAYRGDMPPLSAFPKSQQVTFKYYEGVLCFLEENYFQAEEHLTQAWSLCHKDAMKNKELILTYLVPCHLLTTHTLPSQKLLEPYPRLQKLFLPLSNCIKKGELHAFDLALQQGEDEFVKRRIYLTLERGRDIALRNLLRKVFIAGGFEESKVEGGPRVRRTRIPVAEFAAAISLGSKQMLETDEIECLMANMIYKNLMKGYIARERGFVVLSKSGAFPGTGV.

The PCI domain maps to 249-446 (VTFKYYEGVL…GFVVLSKSGA (198 aa)).

Belongs to the CSN12 family.

In Neurospora crassa (strain ATCC 24698 / 74-OR23-1A / CBS 708.71 / DSM 1257 / FGSC 987), this protein is Protein CSN12 homolog (csn-8).